The following is a 772-amino-acid chain: Protocadherin beta-6 (772 aa).

Residues 1 to 28 (METTLAKTPEKRQVVFLAILLLLWEAGS) form the signal peptide. Cadherin domains are found at residues 31 to 133 (IRYS…SPEF), 134 to 242 (PDTE…APEF), 243 to 346 (VQSL…APKL), 347 to 450 (TISS…APAF), and 451 to 560 (TQTS…APFI). At 31 to 690 (IRYSIPEETE…QDEDMLTLYL (660 aa)) the chain is on the extracellular side. Residues Cys-96 and Cys-102 are joined by a disulfide bond. Asn-169 carries an N-linked (GlcNAc...) asparagine glycan. Ser-223 is a glycosylation site (O-linked (Man) serine). An O-linked (Man) threonine glycan is attached at Thr-225. N-linked (GlcNAc...) asparagine glycosylation is present at Asn-417. N-linked (GlcNAc...) asparagine glycosylation is present at Asn-566. One can recognise a Cadherin 6 domain in the interval 575–675 (LPRAAEPGYL…SQPYLPLPEV (101 aa)). A helical transmembrane segment spans residues 691–711 (VIALASVSSLFLLSVLLFVGV). The Cytoplasmic segment spans residues 712–772 (RLCRRVREAS…DFKFLNHYSQ (61 aa)).

In terms of assembly, forms homodimers in trans (molecules expressed by two different cells). Forms promiscuous heterodimers in cis (at the plasma membrane of the same cell) with other protocadherins.

The protein localises to the cell membrane. Functionally, calcium-dependent cell-adhesion protein involved in cells self-recognition and non-self discrimination. Thereby, it is involved in the establishment and maintenance of specific neuronal connections in the brain. This chain is Protocadherin beta-6, found in Mus musculus (Mouse).